A 701-amino-acid chain; its full sequence is Polyribonucleotide nucleotidyltransferase (701 aa).

Mg(2+) is bound by residues Asp-485 and Asp-491. The region spanning 552-611 is the KH domain; it reads PKIFKTTVDPEKIRDIIGPGGKMINKIIAETNVKIDIEPDGRIFVAAPDDISGNRAISMI. In terms of domain architecture, S1 motif spans 621–689; sequence GQFFLGKVTR…KLGRLSLSRK (69 aa).

Belongs to the polyribonucleotide nucleotidyltransferase family. Mg(2+) is required as a cofactor.

It is found in the cytoplasm. It carries out the reaction RNA(n+1) + phosphate = RNA(n) + a ribonucleoside 5'-diphosphate. In terms of biological role, involved in mRNA degradation. Catalyzes the phosphorolysis of single-stranded polyribonucleotides processively in the 3'- to 5'-direction. This Caldicellulosiruptor bescii (strain ATCC BAA-1888 / DSM 6725 / KCTC 15123 / Z-1320) (Anaerocellum thermophilum) protein is Polyribonucleotide nucleotidyltransferase.